The following is a 304-amino-acid chain: Probable 5-dehydro-4-deoxyglucarate dehydratase (304 aa).

It belongs to the DapA family.

It carries out the reaction 5-dehydro-4-deoxy-D-glucarate + H(+) = 2,5-dioxopentanoate + CO2 + H2O. It participates in carbohydrate acid metabolism; D-glucarate degradation; 2,5-dioxopentanoate from D-glucarate: step 2/2. The sequence is that of Probable 5-dehydro-4-deoxyglucarate dehydratase from Pseudarthrobacter chlorophenolicus (strain ATCC 700700 / DSM 12829 / CIP 107037 / JCM 12360 / KCTC 9906 / NCIMB 13794 / A6) (Arthrobacter chlorophenolicus).